A 704-amino-acid chain; its full sequence is Elongation factor G (704 aa).

Residues 8–290 form the tr-type G domain; that stretch reads ARYRNIGISA…AVIDYLPSPV (283 aa). GTP contacts are provided by residues 17-24, 88-92, and 142-145; these read AHIDAGKT, DTPGH, and NKMD. Residues K504 and K643 each carry the N6-acetyllysine modification.

This sequence belongs to the TRAFAC class translation factor GTPase superfamily. Classic translation factor GTPase family. EF-G/EF-2 subfamily.

The protein resides in the cytoplasm. Functionally, catalyzes the GTP-dependent ribosomal translocation step during translation elongation. During this step, the ribosome changes from the pre-translocational (PRE) to the post-translocational (POST) state as the newly formed A-site-bound peptidyl-tRNA and P-site-bound deacylated tRNA move to the P and E sites, respectively. Catalyzes the coordinated movement of the two tRNA molecules, the mRNA and conformational changes in the ribosome. The sequence is that of Elongation factor G from Escherichia coli O17:K52:H18 (strain UMN026 / ExPEC).